The chain runs to 230 residues: Large ribosomal subunit protein uL1 (230 aa).

Belongs to the universal ribosomal protein uL1 family. In terms of assembly, part of the 50S ribosomal subunit.

Binds directly to 23S rRNA. The L1 stalk is quite mobile in the ribosome, and is involved in E site tRNA release. In terms of biological role, protein L1 is also a translational repressor protein, it controls the translation of the L11 operon by binding to its mRNA. The sequence is that of Large ribosomal subunit protein uL1 from Limosilactobacillus fermentum (strain NBRC 3956 / LMG 18251) (Lactobacillus fermentum).